Here is a 78-residue protein sequence, read N- to C-terminus: Large ribosomal subunit protein bL28 (78 aa).

Belongs to the bacterial ribosomal protein bL28 family.

The sequence is that of Large ribosomal subunit protein bL28 from Azoarcus sp. (strain BH72).